The following is a 71-amino-acid chain: MIVHNICHPPRPHCQLKLLCLLNAKAVSYFMVGTDDKIEAEVWVFADESVAVARPGQPVKAYHTIQSVCFH.

This chain is 7.9 kDa protein, found in Pseudomonas aeruginosa (Bacteriophage Pf3).